Consider the following 96-residue polypeptide: Acylphosphatase (96 aa).

The region spanning 4–91 is the Acylphosphatase-like domain; the sequence is RVHVYVKGKV…GEFDDFRILY (88 aa). Active-site residues include R19 and N37.

It belongs to the acylphosphatase family.

It catalyses the reaction an acyl phosphate + H2O = a carboxylate + phosphate + H(+). This Syntrophus aciditrophicus (strain SB) protein is Acylphosphatase (acyP).